We begin with the raw amino-acid sequence, 443 residues long: UDP-N-acetylmuramate--L-alanine ligase (443 aa).

110–116 (GAHGKTS) serves as a coordination point for ATP.

It belongs to the MurCDEF family.

The protein localises to the cytoplasm. It catalyses the reaction UDP-N-acetyl-alpha-D-muramate + L-alanine + ATP = UDP-N-acetyl-alpha-D-muramoyl-L-alanine + ADP + phosphate + H(+). It participates in cell wall biogenesis; peptidoglycan biosynthesis. In terms of biological role, cell wall formation. This Streptococcus equi subsp. zooepidemicus (strain H70) protein is UDP-N-acetylmuramate--L-alanine ligase.